Here is a 141-residue protein sequence, read N- to C-terminus: Protein NrdI (141 aa).

The protein belongs to the NrdI family.

In terms of biological role, probably involved in ribonucleotide reductase function. The sequence is that of Protein NrdI from Wigglesworthia glossinidia brevipalpis.